The primary structure comprises 1703 residues: Homeobox protein prospero (1703 aa).

Disordered regions lie at residues 23–292, 322–357, 437–521, 608–692, 732–751, 823–844, 875–951, 1040–1101, 1197–1217, 1245–1389, and 1418–1469; these read LKAN…SNGG, SVST…SGAS, NSIA…QSQL, EPQT…ESVD, EDDD…CLKK, QEDS…VEKN, SECQ…DSGA, FEQE…RMGG, SPRT…TQSA, PFCL…VSLP, and AGQA…PSML. Over residues 36–53 the composition is skewed to low complexity; the sequence is QQHQPQFQQQQQQQQQQQ. Over residues 66 to 79 the composition is skewed to polar residues; sequence SNGHTSPIPSQVNG. Low complexity predominate over residues 92–109; the sequence is TNTNTGSHSHSNSGNTNT. The segment covering 110-126 has biased composition (basic and acidic residues); it reads DADKEQEREKAKEKANE. Residues 127–136 are compositionally biased toward acidic residues; sequence EESEDSDDDV. 5 stretches are compositionally biased toward low complexity: residues 137 to 188, 196 to 255, 274 to 292, 327 to 337, and 346 to 357; these read VVVL…GGSS, SSRQ…ANSK, ASSN…SNGG, NSSSSNNNNSS, and SPTSNSPVSGAS. Positions 437–452 are enriched in polar residues; it reads NSIAPANSTPMSNGTN. The span at 453 to 472 shows a compositional bias: low complexity; the sequence is ASISPGSAHSSSHSHQGVSP. Phosphoserine occurs at positions 479, 482, 485, and 497. 2 stretches are compositionally biased toward polar residues: residues 503–521 and 608–617; these read SVSS…QSQL and EPQTAPQPQQ. Positions 618–642 are enriched in low complexity; that stretch reads SPHGSSHSSRSGSGSGSHSSMASDG. 2 stretches are compositionally biased toward basic and acidic residues: residues 643-658 and 674-691; these read SLRR…HGAQ and SESR…KESV. Residues Ser651 and Ser654 each carry the phosphoserine modification. A compositionally biased stretch (acidic residues) spans 875–892; that stretch reads SECQELDQDQDVEQEQEP. Positions 927–944 are enriched in low complexity; it reads PGSSSPSPSPLKPKTSLG. Over residues 1040–1054 the composition is skewed to basic and acidic residues; that stretch reads FEQEQQEQQRRKEEQ. Positions 1055–1076 are enriched in low complexity; that stretch reads QQQIQRQQQHLQQLQQQQMEQQ. The segment covering 1208 to 1217 has biased composition (polar residues); the sequence is NGPTPATQSA. Low complexity predominate over residues 1252–1278; the sequence is QQQQQQTAQQQQSAQQQQQSSQQTQQQ. Residues 1291–1298 carry the Nuclear localization signal motif; it reads PKKKRHKV. Residues 1328 to 1348 show a composition bias toward low complexity; it reads PQQQQQQQQQQQQQQQQQQQQ. Over residues 1349 to 1367 the composition is skewed to polar residues; that stretch reads ASNGGNSNATPAQSPTRSS. A compositionally biased stretch (pro residues) spans 1374 to 1384; sequence PQPPPPPPPMM. The span at 1427-1437 shows a compositional bias: basic residues; the sequence is HQHHQQHHPHH. Over residues 1438–1451 the composition is skewed to low complexity; that stretch reads QSMQLSSSPPGSLG. The 59-residue stretch at 1545–1603 folds into the Prospero-type homeo domain; it reads SSTLTPMHLRKAKLMFFWVRYPSSAVLKMYFPDIKFNKNNTAQLVKWFSNFREFYYIQM. Residues 1545-1703 form a homeo-Prospero region; that stretch reads SSTLTPMHLR…KSPNFLEQLE (159 aa). Residues 1604–1703 form the Prospero domain; that stretch reads EKYARQAVTE…KSPNFLEQLE (100 aa).

Belongs to the Prospero homeodomain family.

It is found in the nucleus. Its subcellular location is the cytoplasm. The protein resides in the cell cortex. Its function is as follows. Homeodomain protein that controls neuronal identity. As a transcriptional factor, regulates the expression of ftz, eve and en in a subset of neuroblast progeny and modulates the transcriptional activity of other homeodomain proteins such as Dfd. Required for proper neuronal differentiation, axonal outgrowth and pathfinding of most or all neurons and their precursors in central and peripheral nervous systems. Regulates asymmetric stem cell self-renewal together with brat. In Drosophila melanogaster (Fruit fly), this protein is Homeobox protein prospero (pros).